Here is a 286-residue protein sequence, read N- to C-terminus: MQLLDGKATAATIREELRAEIAALTPRARRAPGLAVILVGEDPASQVYVRNKERACHDTGIVSEAFRLAPTTTQEELERLIADLNVRPDIDGILLQLPLPRGLDAQRCLEAIDPAKDVDGFHPQNMGRLALGLPGFRPCTPAGVMTLLERYDLSPSGRKAVVVGRSNIVGKPLALMLGAPGKYANATVTVCHSGTPDLAAECRTADFLFLAIGRPRFVTADMVREGAVVVDVGINRTETGLAGDCDFEGVSRVASAITPVPGGVGPMTIAQLLVNTVQSWKVRCGL.

NADP(+)-binding positions include 164–166 (GRS), S193, and I234.

This sequence belongs to the tetrahydrofolate dehydrogenase/cyclohydrolase family. Homodimer.

It catalyses the reaction (6R)-5,10-methylene-5,6,7,8-tetrahydrofolate + NADP(+) = (6R)-5,10-methenyltetrahydrofolate + NADPH. It carries out the reaction (6R)-5,10-methenyltetrahydrofolate + H2O = (6R)-10-formyltetrahydrofolate + H(+). It participates in one-carbon metabolism; tetrahydrofolate interconversion. Catalyzes the oxidation of 5,10-methylenetetrahydrofolate to 5,10-methenyltetrahydrofolate and then the hydrolysis of 5,10-methenyltetrahydrofolate to 10-formyltetrahydrofolate. This chain is Bifunctional protein FolD, found in Nitratidesulfovibrio vulgaris (strain ATCC 29579 / DSM 644 / CCUG 34227 / NCIMB 8303 / VKM B-1760 / Hildenborough) (Desulfovibrio vulgaris).